A 178-amino-acid polypeptide reads, in one-letter code: ATP-dependent protease subunit HslV (178 aa).

Thr7 is a catalytic residue. Positions 162, 165, and 168 each coordinate Na(+).

Belongs to the peptidase T1B family. HslV subfamily. In terms of assembly, a double ring-shaped homohexamer of HslV is capped on each side by a ring-shaped HslU homohexamer. The assembly of the HslU/HslV complex is dependent on binding of ATP.

Its subcellular location is the cytoplasm. The catalysed reaction is ATP-dependent cleavage of peptide bonds with broad specificity.. Its activity is regulated as follows. Allosterically activated by HslU binding. Protease subunit of a proteasome-like degradation complex believed to be a general protein degrading machinery. In Azoarcus sp. (strain BH72), this protein is ATP-dependent protease subunit HslV.